Reading from the N-terminus, the 490-residue chain is ATP synthase subunit beta, chloroplastic (490 aa).

170–177 (GGAGVGKT) is a binding site for ATP.

It belongs to the ATPase alpha/beta chains family. As to quaternary structure, F-type ATPases have 2 components, CF(1) - the catalytic core - and CF(0) - the membrane proton channel. CF(1) has five subunits: alpha(3), beta(3), gamma(1), delta(1), epsilon(1). CF(0) has four main subunits: a(1), b(1), b'(1) and c(9-12).

It is found in the plastid. The protein localises to the chloroplast thylakoid membrane. The catalysed reaction is ATP + H2O + 4 H(+)(in) = ADP + phosphate + 5 H(+)(out). Its function is as follows. Produces ATP from ADP in the presence of a proton gradient across the membrane. The catalytic sites are hosted primarily by the beta subunits. This is ATP synthase subunit beta, chloroplastic from Pinus koraiensis (Korean pine).